The primary structure comprises 212 residues: 3-isopropylmalate dehydratase small subunit (212 aa).

The protein belongs to the LeuD family. LeuD type 1 subfamily. As to quaternary structure, heterodimer of LeuC and LeuD.

The catalysed reaction is (2R,3S)-3-isopropylmalate = (2S)-2-isopropylmalate. The protein operates within amino-acid biosynthesis; L-leucine biosynthesis; L-leucine from 3-methyl-2-oxobutanoate: step 2/4. Functionally, catalyzes the isomerization between 2-isopropylmalate and 3-isopropylmalate, via the formation of 2-isopropylmaleate. The sequence is that of 3-isopropylmalate dehydratase small subunit from Pseudomonas aeruginosa (strain LESB58).